A 357-amino-acid polypeptide reads, in one-letter code: uncharacterized protein (357 aa).

A Radical SAM core domain is found at 27–242 (HFGNTVTFER…VSSVRLNFPK (216 aa)). 3 residues coordinate [4Fe-4S] cluster: Cys44, Cys50, and Cys53.

Requires [4Fe-4S] cluster as cofactor.

This is an uncharacterized protein from Methanocaldococcus jannaschii (strain ATCC 43067 / DSM 2661 / JAL-1 / JCM 10045 / NBRC 100440) (Methanococcus jannaschii).